Consider the following 112-residue polypeptide: Nucleoid-associated protein CV_1611 (112 aa).

It belongs to the YbaB/EbfC family. Homodimer.

It localises to the cytoplasm. The protein localises to the nucleoid. In terms of biological role, binds to DNA and alters its conformation. May be involved in regulation of gene expression, nucleoid organization and DNA protection. This is Nucleoid-associated protein CV_1611 from Chromobacterium violaceum (strain ATCC 12472 / DSM 30191 / JCM 1249 / CCUG 213 / NBRC 12614 / NCIMB 9131 / NCTC 9757 / MK).